A 644-amino-acid polypeptide reads, in one-letter code: Alkyldihydroxyacetonephosphate synthase, peroxisomal (644 aa).

A peroxisome-targeting transit peptide spans 1 to 44; sequence MAEAAGEAGASERDPDAVRARRRLRVLSGHLLGRPQEAPSTNEC. Positions 1–70 are disordered; sequence MAEAAGEAGA…PAAPESGTIP (70 aa). Over residues 10–19 the composition is skewed to basic and acidic residues; it reads ASERDPDAVR. Residues 49–64 show a composition bias toward low complexity; sequence AASAAGASPAASPAAP. 2 positions are modified to phosphoserine: Ser51 and Ser56. Position 88 is an N6-acetyllysine (Lys88). The FAD-binding PCMH-type domain maps to 188–370; that stretch reads FERIPDIVVW…TEATIKIRPT (183 aa). FAD contacts are provided by residues 220-226, 289-295, and 302-305; these read PIGGGTS, DSLEFSI, and TRAS. Residue Lys333 is modified to N6-acetyllysine. 354–360 contributes to the FAD binding site; that stretch reads EGTLGVI. Residue Arg501 participates in substrate binding. The active-site Proton donor/acceptor is Tyr564. 2 important for enzyme activity regions span residues 601–603 and 640–644; these read HHH and NRNLL.

It belongs to the FAD-binding oxidoreductase/transferase type 4 family. Homodimer. Requires FAD as cofactor.

It localises to the peroxisome membrane. The protein resides in the peroxisome. The enzyme catalyses a long chain fatty alcohol + a 1-acylglycerone 3-phosphate = a 1-O-alkylglycerone 3-phosphate + a long-chain fatty acid + H(+). It carries out the reaction hexadecan-1-ol + 1-hexadecanoylglycerone 3-phosphate = 1-O-hexadecylglycerone 3-phosphate + hexadecanoate + H(+). The catalysed reaction is 1-hexadecanoylglycerone 3-phosphate + a long-chain fatty acid = a 1-acylglycerone 3-phosphate + hexadecanoate. It participates in glycerolipid metabolism; ether lipid biosynthesis. With respect to regulation, inhibited by divalent cation Mg(2+). Catalyzes the exchange of the acyl chain in acyl-dihydroxyacetonephosphate (acyl-DHAP) for a long chain fatty alcohol, yielding the first ether linked intermediate, i.e. alkyl-dihydroxyacetonephosphate (alkyl-DHAP), in the pathway of ether lipid biosynthesis. This chain is Alkyldihydroxyacetonephosphate synthase, peroxisomal (Agps), found in Rattus norvegicus (Rat).